The primary structure comprises 1074 residues: DNA annealing helicase and endonuclease ZRANB3 (1074 aa).

Residues 46 to 208 (TFALRRDGRC…FMQIEALFPQ (163 aa)) enclose the Helicase ATP-binding domain. A DNA annealing helicase activity region spans residues 46-481 (TFALRRDGRC…GRKEKLQAEE (436 aa)). 59–66 (DEMGLGKT) is an ATP binding site. The DEAH box motif lies at 157-160 (DESH). A Helicase C-terminal domain is found at 325-481 (AVKDYIKMML…GRKEKLQAEE (157 aa)). Residues 519 to 526 (QRDIRSFF) carry the PIP-box motif. Residue S566 is modified to Phosphoserine. The RanBP2-type zinc-finger motif lies at 617–647 (FCGEGWQCAFCTYINNSVLPYCEMCENPRGG). The segment at 659–719 (QNKNKNEKDD…RLTPQPGDEQ (61 aa)) is disordered. 2 stretches are compositionally biased toward basic and acidic residues: residues 662-674 (NKNEKDDSQDTSK) and 696-711 (AKSKEEISTTESEDRL). In terms of domain architecture, HNH spans 1006–1046 (PGEGHFWQVDHIKPVSGGGGQCSLDNLQTLCTVCHRERTAQ). The tract at residues 1006 to 1074 (PGEGHFWQVD…SDITRFLVKK (69 aa)) is endonuclease activity. The APIM motif signature appears at 1069 to 1073 (RFLVK).

This sequence belongs to the SNF2/RAD54 helicase family. Interacts (via PIP-box and RanBP2-type zinc finger) with PCNA (when PCNA is polyubiquitinated via 'Lys-63'-linked polyubiquitin).

The protein localises to the nucleus. It is found in the chromosome. DNA annealing helicase and endonuclease required to maintain genome stability at stalled or collapsed replication forks by facilitating fork restart and limiting inappropriate recombination that could occur during template switching events. Recruited to the sites of stalled DNA replication by polyubiquitinated PCNA and acts as a structure-specific endonuclease that cleaves the replication fork D-loop intermediate, generating an accessible 3'-OH group in the template of the leading strand, which is amenable to extension by DNA polymerase. In addition to endonuclease activity, also catalyzes the fork regression via annealing helicase activity in order to prevent disintegration of the replication fork and the formation of double-strand breaks. In Bos taurus (Bovine), this protein is DNA annealing helicase and endonuclease ZRANB3 (ZRANB3).